We begin with the raw amino-acid sequence, 463 residues long: Glutamate--tRNA ligase (463 aa).

Residues 8 to 18 carry the 'HIGH' region motif; it reads PSPTGYLHIGG. A 'KMSKS' region motif is present at residues 236–240; sequence RLSKR. Lys-239 contributes to the ATP binding site.

This sequence belongs to the class-I aminoacyl-tRNA synthetase family. Glutamate--tRNA ligase type 1 subfamily. Monomer.

The protein resides in the cytoplasm. The catalysed reaction is tRNA(Glu) + L-glutamate + ATP = L-glutamyl-tRNA(Glu) + AMP + diphosphate. In terms of biological role, catalyzes the attachment of glutamate to tRNA(Glu) in a two-step reaction: glutamate is first activated by ATP to form Glu-AMP and then transferred to the acceptor end of tRNA(Glu). The chain is Glutamate--tRNA ligase from Nitrosomonas eutropha (strain DSM 101675 / C91 / Nm57).